Reading from the N-terminus, the 278-residue chain is Elongation factor Ts (278 aa).

Positions 82–85 (TDFV) are involved in Mg(2+) ion dislocation from EF-Tu.

The protein belongs to the EF-Ts family.

The protein resides in the cytoplasm. Functionally, associates with the EF-Tu.GDP complex and induces the exchange of GDP to GTP. It remains bound to the aminoacyl-tRNA.EF-Tu.GTP complex up to the GTP hydrolysis stage on the ribosome. The chain is Elongation factor Ts (tsf) from Streptomyces ramocissimus.